Here is a 72-residue protein sequence, read N- to C-terminus: uncharacterized protein (72 aa).

The helical transmembrane segment at 41–58 threads the bilayer; that stretch reads FSFLVHIMCGLTLTSYVI.

It is found in the membrane. This is an uncharacterized protein from Dictyostelium discoideum (Social amoeba).